Reading from the N-terminus, the 420-residue chain is Glycogen synthase kinase-3 beta (420 aa).

Polar residues predominate over residues 1 to 22 (MSGRPRTTSFAESCKPVQQPSA). A disordered region spans residues 1–53 (MSGRPRTTSFAESCKPVQQPSAFGSMKVSRDKDGSKVTTVVATPGQGPDRPQE). Residue Ser-9 is modified to Phosphoserine; by PKB/AKT1, RPS6KA3 and SGK3. A lipid anchor (S-palmitoyl cysteine) is attached at Cys-14. Residues 56-340 (YTDTKVIGNG…PLEACAHSFF (285 aa)) enclose the Protein kinase domain. ATP-binding positions include 62–70 (IGNGSFGVV) and Lys-85. Catalysis depends on Asp-181, which acts as the Proton acceptor. Tyr-216 is subject to Phosphotyrosine. Residues 386–401 (AAASTPTNATAASDAN) are compositionally biased toward low complexity. The interval 386–420 (AAASTPTNATAASDANTGDRGQTNNAASASASNST) is disordered. Phosphoserine is present on Ser-389. Thr-390 and Thr-402 each carry phosphothreonine. Over residues 409–420 (NNAASASASNST) the composition is skewed to low complexity.

This sequence belongs to the protein kinase superfamily. CMGC Ser/Thr protein kinase family. GSK-3 subfamily. In terms of assembly, monomer. Interacts with ARRB2, DISC1 and ZBED3. Interacts with CABYR, MMP2, MUC1, NIN and PRUNE1. Interacts with AXIN1; the interaction mediates hyperphosphorylation of CTNNB1 leading to its ubiquitination and destruction. Interacts with and phosphorylates SNAI1. Interacts with DNM1L (via a C-terminal domain). Found in a complex composed of MACF1, APC, AXIN1, CTNNB1 and GSK3B. Interacts with SGK3. Interacts with DAB2IP (via C2 domain); the interaction stimulates GSK3B kinase activation. Interacts (via C2 domain) with PPP2CA. Interacts with the CLOCK-BMAL1 heterodimer. Interacts with the BMAL1. Interacts with CTNND2. Interacts with NCYM. The complex composed, at least, of APC, CTNNB1 and GSK3B interacts with JPT1; the interaction requires the inactive form of GSK3B (phosphorylated at 'Ser-9'). Forms a complex composed of PRKAR2A or PRKAR2B, GSK3B and GSKIP through GSKIP interaction; facilitates PKA-induced phosphorylation and regulates GSK3B activity. Interacts with GSKIP. Interacts with GID8. Interacts with PIWIL2. Interacts with LMBR1L. Interacts with DDX3X. Interacts with BIRC2. Interacts with TNFRSF10B; TNFRSF10B stimulation inhibits GSK3B kinase activity. Interacts with RICTOR; the interaction results in phosphorylation of RICTOR at 'Thr-1695' by GSK3B which facilitates FBXW7-mediated ubiquitination and subsequent degradation of RICTOR. Found in a complex with SLC39A6, SLC39A10 and with GSK3B that controls NCAM1 phosphorylation. Interacts with PKP3 (via ARM repeats); the interaction may be involved in PKP3 protein degradation. Phosphorylated by AKT1 and ILK1. Upon insulin-mediated signaling, the activated PKB/AKT1 protein kinase phosphorylates and deactivates GSK3B, resulting in the dephosphorylation and activation of GYS1. Activated by phosphorylation at Tyr-216. Inactivated by phosphorylation at Ser-9. Phosphorylated in a circadian manner in the hippocampus. Post-translationally, mono-ADP-ribosylation by PARP10 negatively regulates kinase activity. In terms of processing, palmitoylated. Palmitoylation by ZDHHC4 prevents AKT1-mediated phosphorylation. In terms of tissue distribution, expressed in testis, thymus, prostate and ovary and weakly expressed in lung, brain and kidney. Colocalizes with EIF2AK2/PKR and TAU in the Alzheimer disease (AD) brain.

It localises to the cytoplasm. Its subcellular location is the nucleus. It is found in the cell membrane. The enzyme catalyses L-seryl-[tau protein] + ATP = O-phospho-L-seryl-[tau protein] + ADP + H(+). It carries out the reaction L-threonyl-[tau protein] + ATP = O-phospho-L-threonyl-[tau protein] + ADP + H(+). It catalyses the reaction L-seryl-[protein] + ATP = O-phospho-L-seryl-[protein] + ADP + H(+). The catalysed reaction is L-threonyl-[protein] + ATP = O-phospho-L-threonyl-[protein] + ADP + H(+). With respect to regulation, activated by phosphorylation at Tyr-216. In response to insulin, inhibited by phosphorylation at Ser-9 by PKB/AKT1 and RPS6KA3; phosphorylation at this site causes a conformational change, preventing access of substrates to the active site. Inhibited by IL22 treatment which also triggers phosphorylation at Ser-9, promoting inactivation. Inhibited by lithium. Functionally, constitutively active protein kinase that acts as a negative regulator in the hormonal control of glucose homeostasis, Wnt signaling and regulation of transcription factors and microtubules, by phosphorylating and inactivating glycogen synthase (GYS1 or GYS2), EIF2B, CTNNB1/beta-catenin, APC, AXIN1, DPYSL2/CRMP2, JUN, NFATC1/NFATC, MAPT/TAU and MACF1. Requires primed phosphorylation of the majority of its substrates. In skeletal muscle, contributes to insulin regulation of glycogen synthesis by phosphorylating and inhibiting GYS1 activity and hence glycogen synthesis. May also mediate the development of insulin resistance by regulating activation of transcription factors. Regulates protein synthesis by controlling the activity of initiation factor 2B (EIF2BE/EIF2B5) in the same manner as glycogen synthase. In Wnt signaling, GSK3B forms a multimeric complex with APC, AXIN1 and CTNNB1/beta-catenin and phosphorylates the N-terminus of CTNNB1 leading to its degradation mediated by ubiquitin/proteasomes. Phosphorylates JUN at sites proximal to its DNA-binding domain, thereby reducing its affinity for DNA. Phosphorylates NFATC1/NFATC on conserved serine residues promoting NFATC1/NFATC nuclear export, shutting off NFATC1/NFATC gene regulation, and thereby opposing the action of calcineurin. Phosphorylates MAPT/TAU on 'Thr-548', decreasing significantly MAPT/TAU ability to bind and stabilize microtubules. MAPT/TAU is the principal component of neurofibrillary tangles in Alzheimer disease. Plays an important role in ERBB2-dependent stabilization of microtubules at the cell cortex. Phosphorylates MACF1, inhibiting its binding to microtubules which is critical for its role in bulge stem cell migration and skin wound repair. Probably regulates NF-kappa-B (NFKB1) at the transcriptional level and is required for the NF-kappa-B-mediated anti-apoptotic response to TNF-alpha (TNF/TNFA). Negatively regulates replication in pancreatic beta-cells, resulting in apoptosis, loss of beta-cells and diabetes. Through phosphorylation of the anti-apoptotic protein MCL1, may control cell apoptosis in response to growth factors deprivation. Phosphorylates MUC1 in breast cancer cells, decreasing the interaction of MUC1 with CTNNB1/beta-catenin. Is necessary for the establishment of neuronal polarity and axon outgrowth. Phosphorylates MARK2, leading to inhibition of its activity. Phosphorylates SIK1 at 'Thr-182', leading to sustainment of its activity. Phosphorylates ZC3HAV1 which enhances its antiviral activity. Phosphorylates SNAI1, leading to its ubiquitination and proteasomal degradation. Phosphorylates SFPQ at 'Thr-687' upon T-cell activation. Phosphorylates NR1D1 st 'Ser-55' and 'Ser-59' and stabilizes it by protecting it from proteasomal degradation. Regulates the circadian clock via phosphorylation of the major clock components including BMAL1, CLOCK and PER2. Phosphorylates FBXL2 at 'Thr-404' and primes it for ubiquitination by the SCF(FBXO3) complex and proteasomal degradation. Phosphorylates CLOCK AT 'Ser-427' and targets it for proteasomal degradation. Phosphorylates BMAL1 at 'Ser-17' and 'Ser-21' and primes it for ubiquitination and proteasomal degradation. Phosphorylates OGT at 'Ser-3' or 'Ser-4' which positively regulates its activity. Phosphorylates MYCN in neuroblastoma cells which may promote its degradation. Regulates the circadian rhythmicity of hippocampal long-term potentiation and BMAL1 and PER2 expression. Acts as a regulator of autophagy by mediating phosphorylation of KAT5/TIP60 under starvation conditions, activating KAT5/TIP60 acetyltransferase activity and promoting acetylation of key autophagy regulators, such as ULK1 and RUBCNL/Pacer. Negatively regulates extrinsic apoptotic signaling pathway via death domain receptors. Promotes the formation of an anti-apoptotic complex, made of DDX3X, BRIC2 and GSK3B, at death receptors, including TNFRSF10B. The anti-apoptotic function is most effective with weak apoptotic signals and can be overcome by stronger stimulation. Phosphorylates E2F1, promoting the interaction between E2F1 and USP11, stabilizing E2F1 and promoting its activity. Phosphorylates mTORC2 complex component RICTOR at 'Ser-1235' in response to endoplasmic stress, inhibiting mTORC2. Phosphorylates mTORC2 complex component RICTOR at 'Thr-1695' which facilitates FBXW7-mediated ubiquitination and subsequent degradation of RICTOR. Phosphorylates FXR1, promoting FXR1 ubiquitination by the SCF(FBXO4) complex and FXR1 degradation by the proteasome. Phosphorylates interleukin-22 receptor subunit IL22RA1, preventing its proteasomal degradation. This is Glycogen synthase kinase-3 beta from Homo sapiens (Human).